Reading from the N-terminus, the 416-residue chain is Sulfoquinovosyl glycerol-binding protein SmoF (416 aa).

The first 29 residues, 1–29, serve as a signal peptide directing secretion; sequence MTLKTIRGKALMGAALCATMLTFSGQAFA. Residue Gln40 coordinates 3-(6-sulfo-alpha-D-quinovosyl)glycerol. His41 is a 6-sulfo-D-quinovose binding site. The 3-(6-sulfo-alpha-D-quinovosyl)glycerol site is built by Ser71, Asp95, Asp141, Gly194, Thr248, Gly303, Trp304, and Arg373. 6-sulfo-D-quinovose-binding residues include Gly303, Trp304, and Arg373.

The protein belongs to the bacterial solute-binding protein 1 family. The complex is probably composed of two ATP-binding proteins (SmoE), two transmembrane proteins (SmoG and SmoH) and a solute-binding protein (SmoF).

It is found in the periplasm. Functionally, part of the ABC transporter complex SmoEFGH involved in sulfoquinovosyl glycerol (SQGro) uptake. Binds sulfoquinovosyl glycerol (SQGro). Can also bind sulfoquinovose (SQ), methyl alpha-sulfoquinovoside (SQMe) and a short-chain derivative of sulfoquinovosyl diacylglycerol (SQDG). Cannot bind D-glucose and D-glucuronic acid. This is Sulfoquinovosyl glycerol-binding protein SmoF from Agrobacterium fabrum (strain C58 / ATCC 33970) (Agrobacterium tumefaciens (strain C58)).